A 260-amino-acid polypeptide reads, in one-letter code: Coiled-coil domain-containing protein 127 (260 aa).

Residues 47–135 adopt a coiled-coil conformation; that stretch reads ESQKEIEKAR…QIIQEKSQRQ (89 aa).

In Rattus norvegicus (Rat), this protein is Coiled-coil domain-containing protein 127 (Ccdc127).